Here is a 516-residue protein sequence, read N- to C-terminus: Chromosomal replication initiator protein DnaA (516 aa).

The segment at 1 to 72 (MSLEHWNLCL…LLSEFAGDDL (72 aa)) is domain I, interacts with DnaA modulators. The interval 72–179 (LAPALKLAVK…QVEGGINHGA (108 aa)) is domain II. The segment at 180 to 396 (NLNNSFTFDN…GALKRVIANS (217 aa)) is domain III, AAA+ region. ATP contacts are provided by glycine 224, glycine 226, lysine 227, and threonine 228. Residues 397 to 516 (HFTGRAITPD…YKQLMRILTT (120 aa)) form a domain IV, binds dsDNA region.

It belongs to the DnaA family. Oligomerizes as a right-handed, spiral filament on DNA at oriC.

It is found in the cytoplasm. Its function is as follows. Plays an essential role in the initiation and regulation of chromosomal replication. ATP-DnaA binds to the origin of replication (oriC) to initiate formation of the DNA replication initiation complex once per cell cycle. Binds the DnaA box (a 9 base pair repeat at the origin) and separates the double-stranded (ds)DNA. Forms a right-handed helical filament on oriC DNA; dsDNA binds to the exterior of the filament while single-stranded (ss)DNA is stabiized in the filament's interior. The ATP-DnaA-oriC complex binds and stabilizes one strand of the AT-rich DNA unwinding element (DUE), permitting loading of DNA polymerase. After initiation quickly degrades to an ADP-DnaA complex that is not apt for DNA replication. Binds acidic phospholipids. The sequence is that of Chromosomal replication initiator protein DnaA from Marinomonas sp. (strain MWYL1).